We begin with the raw amino-acid sequence, 217 residues long: Small ribosomal subunit protein uS3c (217 aa).

The KH type-2 domain maps to 39–109; it reads IRNFLRTKLI…RFRITITYIP (71 aa).

This sequence belongs to the universal ribosomal protein uS3 family. Part of the 30S ribosomal subunit.

Its subcellular location is the plastid. It is found in the chloroplast. The chain is Small ribosomal subunit protein uS3c (rps3) from Chlorokybus atmophyticus (Soil alga).